Here is a 532-residue protein sequence, read N- to C-terminus: Vesicular acetylcholine transporter unc-17 (532 aa).

The Cytoplasmic segment spans residues 1 to 31 (MGFNVPVINRDSEILKADAKKWLEQQDNQKK). The chain crosses the membrane as a helical span at residues 32-52 (CVLVIVSIALLLDNMLYMVIV). The Lumenal, vesicle portion of the chain corresponds to 53-101 (PIIPKYLRDIHNYQVTFEGYHNETSQLANGTYLVREVGGRINFLDEELE). 2 N-linked (GlcNAc...) asparagine glycosylation sites follow: asparagine 74 and asparagine 81. Residues 102-121 (LGWLFASKALLQIFVNPFSG) traverse the membrane as a helical segment. The Cytoplasmic segment spans residues 122 to 130 (YIIDRVGYE). Residues 131–151 (IPMILGLCTMFFSTAIFALGK) form a helical membrane-spanning segment. Residues 152-160 (SYGVLLFAR) lie on the Lumenal, vesicle side of the membrane. A helical membrane pass occupies residues 161-180 (SLQGFGSAFADTSGLAMIAD). At 181-191 (RFTEENERSAA) the chain is on the cytoplasmic side. The chain crosses the membrane as a helical span at residues 192–213 (LGIALAFISFGCLVAPPFGSVL). The Lumenal, vesicle portion of the chain corresponds to 214 to 219 (YSLAGK). Residues 220–242 (PVPFLILSFVCLADAIAVFMVIN) form a helical membrane-spanning segment. Over 243–266 (PHRRGTDSHGEKVQGTPMWRLFMD) the chain is Cytoplasmic. The helical transmembrane segment at 267–286 (PFIACCSGALIMANVSLAFL) threads the bilayer. Residues 287-303 (EPTITTWMSEMMPDTPG) lie on the Lumenal, vesicle side of the membrane. A helical transmembrane segment spans residues 304-328 (WLVGVIWLPPFFPHVLGVYVTVKML). Over 329 to 335 (RAFPHHT) the chain is Cytoplasmic. Residues 336–356 (WAIAMVGLAMEGIACFAIPYT) form a helical membrane-spanning segment. Residues 357–367 (TSVMQLVIPLS) lie on the Lumenal, vesicle side of the membrane. Residues 368–388 (FVCFGIALIDTSLLPMLGHLV) traverse the membrane as a helical segment. Residues 389 to 393 (DTRHV) lie on the Cytoplasmic side of the membrane. The helical transmembrane segment at 394-412 (SVYGSVYAIADISYSLAYA) threads the bilayer. Topologically, residues 413–418 (FGPIIA) are lumenal, vesicle. Residues 419-440 (GWIVTNWGFTALNIIIFATNVT) traverse the membrane as a helical segment. At 441–532 (YAPVLFLLRK…AGYDPLNPQW (92 aa)) the chain is on the cytoplasmic side.

Belongs to the major facilitator superfamily. Vesicular transporter family. In terms of tissue distribution, detected in most regions of the nervous system including the nerve ring, the ventral and dorsal nerve cords, and the pharyngeal nervous system. Expressed in most cholinergic neurons. In addition, expressed in SIA, SIB and SMB sublateral motor neurons.

Its subcellular location is the cytoplasmic vesicle. The protein localises to the secretory vesicle. It is found in the synaptic vesicle membrane. Involved in acetylcholine transport into synaptic vesicles. This Caenorhabditis elegans protein is Vesicular acetylcholine transporter unc-17.